The chain runs to 860 residues: LPS-assembly protein LptD (860 aa).

A signal peptide spans Met1–Ala21.

This sequence belongs to the LptD family. As to quaternary structure, component of the lipopolysaccharide transport and assembly complex. Interacts with LptE and LptA.

It is found in the cell outer membrane. Together with LptE, is involved in the assembly of lipopolysaccharide (LPS) at the surface of the outer membrane. The chain is LPS-assembly protein LptD from Saccharophagus degradans (strain 2-40 / ATCC 43961 / DSM 17024).